The following is a 427-amino-acid chain: Adenylosuccinate synthetase (427 aa).

Residues 12 to 18 (GDEGKGK) and 40 to 42 (GHT) contribute to the GTP site. Asp13 (proton acceptor) is an active-site residue. Mg(2+)-binding residues include Asp13 and Gly40. Residues 13–16 (DEGK), 38–41 (NAGH), Thr128, Arg142, Gln223, Thr238, and Arg302 each bind IMP. His41 acts as the Proton donor in catalysis. A substrate-binding site is contributed by 298-304 (TTTGRPR). Residues Arg304, 330-332 (KLD), and 412-414 (GVG) each bind GTP.

This sequence belongs to the adenylosuccinate synthetase family. As to quaternary structure, homodimer. The cofactor is Mg(2+).

The protein localises to the cytoplasm. The enzyme catalyses IMP + L-aspartate + GTP = N(6)-(1,2-dicarboxyethyl)-AMP + GDP + phosphate + 2 H(+). The protein operates within purine metabolism; AMP biosynthesis via de novo pathway; AMP from IMP: step 1/2. Plays an important role in the de novo pathway of purine nucleotide biosynthesis. Catalyzes the first committed step in the biosynthesis of AMP from IMP. The protein is Adenylosuccinate synthetase of Pelotomaculum thermopropionicum (strain DSM 13744 / JCM 10971 / SI).